Reading from the N-terminus, the 375-residue chain is Queuine tRNA-ribosyltransferase (375 aa).

The active-site Proton acceptor is Asp-89. Substrate is bound by residues 89 to 93, Asp-143, Gln-187, and Gly-214; that span reads DSGGF. An RNA binding region spans residues 245–251; that stretch reads GVGKPED. The Nucleophile role is filled by Asp-264. Residues 269–273 form an RNA binding; important for wobble base 34 recognition region; sequence TRNAR. Zn(2+)-binding residues include Cys-302, Cys-304, Cys-307, and His-333.

It belongs to the queuine tRNA-ribosyltransferase family. As to quaternary structure, homodimer. Within each dimer, one monomer is responsible for RNA recognition and catalysis, while the other monomer binds to the replacement base PreQ1. It depends on Zn(2+) as a cofactor.

It carries out the reaction 7-aminomethyl-7-carbaguanine + guanosine(34) in tRNA = 7-aminomethyl-7-carbaguanosine(34) in tRNA + guanine. Its pathway is tRNA modification; tRNA-queuosine biosynthesis. Its function is as follows. Catalyzes the base-exchange of a guanine (G) residue with the queuine precursor 7-aminomethyl-7-deazaguanine (PreQ1) at position 34 (anticodon wobble position) in tRNAs with GU(N) anticodons (tRNA-Asp, -Asn, -His and -Tyr). Catalysis occurs through a double-displacement mechanism. The nucleophile active site attacks the C1' of nucleotide 34 to detach the guanine base from the RNA, forming a covalent enzyme-RNA intermediate. The proton acceptor active site deprotonates the incoming PreQ1, allowing a nucleophilic attack on the C1' of the ribose to form the product. After dissociation, two additional enzymatic reactions on the tRNA convert PreQ1 to queuine (Q), resulting in the hypermodified nucleoside queuosine (7-(((4,5-cis-dihydroxy-2-cyclopenten-1-yl)amino)methyl)-7-deazaguanosine). This Salmonella enteritidis PT4 (strain P125109) protein is Queuine tRNA-ribosyltransferase.